The primary structure comprises 395 residues: Chalcone synthase (395 aa).

Val-2 bears the N-acetylvaline mark. The active site involves Cys-169.

Belongs to the thiolase-like superfamily. Chalcone/stilbene synthases family.

It carries out the reaction (E)-4-coumaroyl-CoA + 3 malonyl-CoA + 3 H(+) = 2',4,4',6'-tetrahydroxychalcone + 3 CO2 + 4 CoA. It participates in secondary metabolite biosynthesis; flavonoid biosynthesis. The primary product of this enzyme is 4,2',4',6'-tetrahydroxychalcone (also termed naringenin-chalcone or chalcone) which can under specific conditions spontaneously isomerize into naringenin. This is Chalcone synthase (CHS) from Cardamine amara (Large bitter-cress).